Reading from the N-terminus, the 144-residue chain is Large ribosomal subunit protein uL16 (144 aa).

Positions 1–17 (MLQPKKTKFRRQQKGRA) are enriched in basic residues. The disordered stretch occupies residues 1–22 (MLQPKKTKFRRQQKGRAKGNAQ).

Belongs to the universal ribosomal protein uL16 family. As to quaternary structure, part of the 50S ribosomal subunit.

Binds 23S rRNA and is also seen to make contacts with the A and possibly P site tRNAs. In Bacteroides thetaiotaomicron (strain ATCC 29148 / DSM 2079 / JCM 5827 / CCUG 10774 / NCTC 10582 / VPI-5482 / E50), this protein is Large ribosomal subunit protein uL16.